The sequence spans 126 residues: Nuclear transport factor 2B (126 aa).

At Ser-2 the chain carries N-acetylserine. The 115-residue stretch at 9-123 folds into the NTF2 domain; sequence VSKAFVEHYY…FYVFNDIFRL (115 aa).

As to quaternary structure, interacts with RAN1. In terms of tissue distribution, expressed in roots, stems, leaves and flowers, and, at low levels, in siliques.

The protein localises to the cytoplasm. It is found in the nucleus. The protein resides in the nucleus envelope. Functionally, facilitates protein transport into the nucleus. Interacts with various nucleoporins and with Ran-GDP. Could be part of a multicomponent system of cytosolic factors that assemble at the pore complex during nuclear import. The sequence is that of Nuclear transport factor 2B from Arabidopsis thaliana (Mouse-ear cress).